The sequence spans 220 residues: 7-cyano-7-deazaguanine synthase (220 aa).

Phenylalanine 10–leucine 20 is an ATP binding site. Residues cysteine 186, cysteine 195, cysteine 198, and cysteine 201 each contribute to the Zn(2+) site.

This sequence belongs to the QueC family. As to quaternary structure, homodimer. Zn(2+) is required as a cofactor.

The enzyme catalyses 7-carboxy-7-deazaguanine + NH4(+) + ATP = 7-cyano-7-deazaguanine + ADP + phosphate + H2O + H(+). Its pathway is purine metabolism; 7-cyano-7-deazaguanine biosynthesis. In terms of biological role, catalyzes the ATP-dependent conversion of 7-carboxy-7-deazaguanine (CDG) to 7-cyano-7-deazaguanine (preQ(0)). This chain is 7-cyano-7-deazaguanine synthase, found in Bacillus cereus (strain B4264).